We begin with the raw amino-acid sequence, 281 residues long: Pantothenate synthetase (281 aa).

30-37 contributes to the ATP binding site; the sequence is MGNLHLGH. Catalysis depends on His-37, which acts as the Proton donor. Gln-61 lines the (R)-pantoate pocket. Gln-61 is a binding site for beta-alanine. 149–152 is an ATP binding site; sequence GRKD. Gln-155 is a (R)-pantoate binding site. Residues Ile-178 and 186–189 each bind ATP; that span reads MSSR.

The protein belongs to the pantothenate synthetase family. Homodimer.

It localises to the cytoplasm. The enzyme catalyses (R)-pantoate + beta-alanine + ATP = (R)-pantothenate + AMP + diphosphate + H(+). It functions in the pathway cofactor biosynthesis; (R)-pantothenate biosynthesis; (R)-pantothenate from (R)-pantoate and beta-alanine: step 1/1. Its function is as follows. Catalyzes the condensation of pantoate with beta-alanine in an ATP-dependent reaction via a pantoyl-adenylate intermediate. In Shewanella sediminis (strain HAW-EB3), this protein is Pantothenate synthetase.